Reading from the N-terminus, the 361-residue chain is Histidinol-phosphate aminotransferase (361 aa).

Lys-219 is modified (N6-(pyridoxal phosphate)lysine).

Belongs to the class-II pyridoxal-phosphate-dependent aminotransferase family. Histidinol-phosphate aminotransferase subfamily. In terms of assembly, homodimer. Pyridoxal 5'-phosphate serves as cofactor.

The enzyme catalyses L-histidinol phosphate + 2-oxoglutarate = 3-(imidazol-4-yl)-2-oxopropyl phosphate + L-glutamate. It participates in amino-acid biosynthesis; L-histidine biosynthesis; L-histidine from 5-phospho-alpha-D-ribose 1-diphosphate: step 7/9. The polypeptide is Histidinol-phosphate aminotransferase (Acinetobacter baylyi (strain ATCC 33305 / BD413 / ADP1)).